Here is a 45-residue protein sequence, read N- to C-terminus: Host translation inhibitor E66L (45 aa).

This sequence belongs to the asfivirus E66L family.

It localises to the host endoplasmic reticulum. Its function is as follows. Inhibits host protein translation, probably through the EIF2AK2/EIF2S1 signaling pathway. Promotes cell retention in the G0/G1 phase. The protein is Host translation inhibitor E66L of Ornithodoros (relapsing fever ticks).